We begin with the raw amino-acid sequence, 448 residues long: Phosphoglucosamine mutase (448 aa).

The active-site Phosphoserine intermediate is the Ser100. Ser100, Asp240, Asp242, and Asp244 together coordinate Mg(2+). Phosphoserine is present on Ser100.

This sequence belongs to the phosphohexose mutase family. It depends on Mg(2+) as a cofactor. Activated by phosphorylation.

It carries out the reaction alpha-D-glucosamine 1-phosphate = D-glucosamine 6-phosphate. In terms of biological role, catalyzes the conversion of glucosamine-6-phosphate to glucosamine-1-phosphate. The protein is Phosphoglucosamine mutase of Clostridioides difficile (strain 630) (Peptoclostridium difficile).